An 865-amino-acid chain; its full sequence is Aconitate hydratase B (865 aa).

Residues Arg-191, 244-246 (SSR), 414-416 (QDT), and Ser-498 each bind substrate. Residues Cys-710, Cys-769, and Cys-772 each contribute to the [4Fe-4S] cluster site. Positions 791 and 796 each coordinate substrate.

The protein belongs to the aconitase/IPM isomerase family. Monomer. The cofactor is [4Fe-4S] cluster.

The enzyme catalyses citrate = D-threo-isocitrate. It carries out the reaction (2S,3R)-3-hydroxybutane-1,2,3-tricarboxylate = 2-methyl-cis-aconitate + H2O. It functions in the pathway carbohydrate metabolism; tricarboxylic acid cycle; isocitrate from oxaloacetate: step 2/2. It participates in organic acid metabolism; propanoate degradation. In terms of biological role, involved in the catabolism of short chain fatty acids (SCFA) via the tricarboxylic acid (TCA)(acetyl degradation route) and the 2-methylcitrate cycle I (propionate degradation route). Catalyzes the reversible isomerization of citrate to isocitrate via cis-aconitate. Also catalyzes the hydration of 2-methyl-cis-aconitate to yield (2R,3S)-2-methylisocitrate. The apo form of AcnB functions as a RNA-binding regulatory protein which regulates FliC synthesis via interaction with the ftsH transcript to decrease the intracellular levels of FtsH. The lower levels of FtsH protease activity then influence sigma-32, DnaK and ultimately FliC production. This Salmonella typhimurium (strain LT2 / SGSC1412 / ATCC 700720) protein is Aconitate hydratase B (acnB).